The sequence spans 546 residues: (-)-5-epieremophilene synthase STPS2 (546 aa).

Residues Asp-299, Asp-303, Asp-442, Thr-446, and Glu-450 each contribute to the Mg(2+) site. A DDXXD motif motif is present at residues 299–303; sequence DDTYD.

Belongs to the terpene synthase family. Tpsa subfamily. Monomer. It depends on Mg(2+) as a cofactor. Highly expressed in leaves. Expressed at levels in flowers.

The catalysed reaction is (2E,6E)-farnesyl diphosphate = (-)-5-epi-eremophilene + diphosphate. The protein operates within secondary metabolite biosynthesis; terpenoid biosynthesis. Functionally, sesquiterpene synthase that catalyzes the conversion of farnesyl diphosphate to (-)-5-epi-eremophilene. The chain is (-)-5-epieremophilene synthase STPS2 from Salvia miltiorrhiza (Chinese sage).